Consider the following 256-residue polypeptide: Trans-aconitate 2-methyltransferase (256 aa).

The protein belongs to the methyltransferase superfamily. Tam family.

It is found in the cytoplasm. The catalysed reaction is trans-aconitate + S-adenosyl-L-methionine = (E)-3-(methoxycarbonyl)pent-2-enedioate + S-adenosyl-L-homocysteine. Its function is as follows. Catalyzes the S-adenosylmethionine monomethyl esterification of trans-aconitate. The chain is Trans-aconitate 2-methyltransferase from Rhodopseudomonas palustris (strain BisA53).